Reading from the N-terminus, the 345-residue chain is Holliday junction branch migration complex subunit RuvB (345 aa).

Residues 1–182 (MQRLVEVESV…FGMHFRMQFY (182 aa)) form a large ATPase domain (RuvB-L) region. ATP is bound by residues Leu21, Arg22, Gly63, Lys66, Thr67, Thr68, 129-131 (EDY), Arg172, Tyr182, and Arg219. Thr67 is a Mg(2+) binding site. A small ATPAse domain (RuvB-S) region spans residues 183 to 253 (TEIELAKIIQ…RCKYALDELG (71 aa)). Positions 256 to 345 (ESGFDEMDIN…EDDLTQGKLF (90 aa)) are head domain (RuvB-H). 2 residues coordinate DNA: Arg310 and Arg315.

Belongs to the RuvB family. In terms of assembly, homohexamer. Forms an RuvA(8)-RuvB(12)-Holliday junction (HJ) complex. HJ DNA is sandwiched between 2 RuvA tetramers; dsDNA enters through RuvA and exits via RuvB. An RuvB hexamer assembles on each DNA strand where it exits the tetramer. Each RuvB hexamer is contacted by two RuvA subunits (via domain III) on 2 adjacent RuvB subunits; this complex drives branch migration. In the full resolvosome a probable DNA-RuvA(4)-RuvB(12)-RuvC(2) complex forms which resolves the HJ.

The protein resides in the cytoplasm. It carries out the reaction ATP + H2O = ADP + phosphate + H(+). In terms of biological role, the RuvA-RuvB-RuvC complex processes Holliday junction (HJ) DNA during genetic recombination and DNA repair, while the RuvA-RuvB complex plays an important role in the rescue of blocked DNA replication forks via replication fork reversal (RFR). RuvA specifically binds to HJ cruciform DNA, conferring on it an open structure. The RuvB hexamer acts as an ATP-dependent pump, pulling dsDNA into and through the RuvAB complex. RuvB forms 2 homohexamers on either side of HJ DNA bound by 1 or 2 RuvA tetramers; 4 subunits per hexamer contact DNA at a time. Coordinated motions by a converter formed by DNA-disengaged RuvB subunits stimulates ATP hydrolysis and nucleotide exchange. Immobilization of the converter enables RuvB to convert the ATP-contained energy into a lever motion, pulling 2 nucleotides of DNA out of the RuvA tetramer per ATP hydrolyzed, thus driving DNA branch migration. The RuvB motors rotate together with the DNA substrate, which together with the progressing nucleotide cycle form the mechanistic basis for DNA recombination by continuous HJ branch migration. Branch migration allows RuvC to scan DNA until it finds its consensus sequence, where it cleaves and resolves cruciform DNA. The sequence is that of Holliday junction branch migration complex subunit RuvB from Aliarcobacter butzleri (strain RM4018) (Arcobacter butzleri).